A 617-amino-acid polypeptide reads, in one-letter code: Glutamyl-tRNA(Gln) amidotransferase subunit E (617 aa).

Belongs to the GatB/GatE family. GatE subfamily. Heterodimer of GatD and GatE.

The enzyme catalyses L-glutamyl-tRNA(Gln) + L-glutamine + ATP + H2O = L-glutaminyl-tRNA(Gln) + L-glutamate + ADP + phosphate + H(+). In terms of biological role, allows the formation of correctly charged Gln-tRNA(Gln) through the transamidation of misacylated Glu-tRNA(Gln) in organisms which lack glutaminyl-tRNA synthetase. The reaction takes place in the presence of glutamine and ATP through an activated gamma-phospho-Glu-tRNA(Gln). The GatDE system is specific for glutamate and does not act on aspartate. In Natronomonas pharaonis (strain ATCC 35678 / DSM 2160 / CIP 103997 / JCM 8858 / NBRC 14720 / NCIMB 2260 / Gabara) (Halobacterium pharaonis), this protein is Glutamyl-tRNA(Gln) amidotransferase subunit E.